Reading from the N-terminus, the 149-residue chain is Large ribosomal subunit protein uL13 (149 aa).

The protein belongs to the universal ribosomal protein uL13 family. Part of the 50S ribosomal subunit.

In terms of biological role, this protein is one of the early assembly proteins of the 50S ribosomal subunit, although it is not seen to bind rRNA by itself. It is important during the early stages of 50S assembly. This chain is Large ribosomal subunit protein uL13, found in Prosthecochloris aestuarii (strain DSM 271 / SK 413).